The chain runs to 204 residues: Arginine exporter protein ArgO (204 aa).

Transmembrane regions (helical) follow at residues 1 to 21 (MWAV…PLGP), 37 to 57 (LMVA…GIFG), 67 to 87 (LLLG…GWGA), 111 to 131 (IIAT…DTFV), 154 to 174 (TASF…APWL), and 179 to 199 (VQRV…LQLA).

Belongs to the LysE/ArgO transporter (TC 2.A.75) family.

It localises to the cell inner membrane. The catalysed reaction is L-arginine(in) = L-arginine(out). Functionally, involved in the export of arginine. Important to control the intracellular level of arginine and the correct balance between arginine and lysine. In Pectobacterium atrosepticum (strain SCRI 1043 / ATCC BAA-672) (Erwinia carotovora subsp. atroseptica), this protein is Arginine exporter protein ArgO.